The primary structure comprises 328 residues: Aryl-hydrocarbon-interacting protein-like 1 (328 aa).

In terms of domain architecture, PPIase FKBP-type spans 53–145 (KQVGQPMSII…DLDELQKEPQ (93 aa)). 3 TPR repeats span residues 178 to 211 (VPLL…LRNL), 230 to 263 (NTLI…HPGI), and 264 to 297 (VKAY…EPSM).

Interacts with NUB1.

It localises to the cytoplasm. The protein resides in the nucleus. In terms of biological role, may be important in protein trafficking and/or protein folding and stabilization. This is Aryl-hydrocarbon-interacting protein-like 1 (Aipl1) from Mus musculus (Mouse).